A 335-amino-acid polypeptide reads, in one-letter code: Tetraacyldisaccharide 4'-kinase (335 aa).

58–65 (TVGGSGKT) contributes to the ATP binding site.

The protein belongs to the LpxK family.

It carries out the reaction a lipid A disaccharide + ATP = a lipid IVA + ADP + H(+). It functions in the pathway glycolipid biosynthesis; lipid IV(A) biosynthesis; lipid IV(A) from (3R)-3-hydroxytetradecanoyl-[acyl-carrier-protein] and UDP-N-acetyl-alpha-D-glucosamine: step 6/6. Transfers the gamma-phosphate of ATP to the 4'-position of a tetraacyldisaccharide 1-phosphate intermediate (termed DS-1-P) to form tetraacyldisaccharide 1,4'-bis-phosphate (lipid IVA). This Shewanella sp. (strain MR-7) protein is Tetraacyldisaccharide 4'-kinase.